The primary structure comprises 466 residues: MAKTLYNKLMDAHIIRENISTALIYIDRHLIHEVTSPQAFEGLSIANRKLWRKSTNLAVPDHNVPTTNRSSGVSSISDPISRIQIETLGRNCELFGIDEISMNDTRQGIVHIIGPEQGATFPGMSIVCGDSHTSTHGALGALAFGIGTSEVEHVLATNCLWQSKSKNFNIEVNGSLNQHVSAKDIALYIIGQLGTAGGMGFAIEFSGNTIQNLSIEGRMTLCNMAIEAGARIGMVAVDEKTINYVKDRPLAPSGIKWRKAVKYWRTLHSDKNAHFDKTMHFDAKDIKPQVTWGTSPDMVVATDGYVPNPNNAKNQTEKISWKNALNYMHLNANTKISDIKIDKIFIGSCTNSRIEDLRIAADILKDKKIANNIKLALVVPGSGIIKKQAEEEELDKIFINSGFEWREAGCSMCLAMNADKLEVGERCASTSNRNFEGRQGQGSFTHLVSPAIAASSAIAGYLSEVK.

[4Fe-4S] cluster contacts are provided by cysteine 349, cysteine 410, and cysteine 413.

The protein belongs to the aconitase/IPM isomerase family. LeuC type 1 subfamily. Heterodimer of LeuC and LeuD. [4Fe-4S] cluster serves as cofactor.

The enzyme catalyses (2R,3S)-3-isopropylmalate = (2S)-2-isopropylmalate. Its pathway is amino-acid biosynthesis; L-leucine biosynthesis; L-leucine from 3-methyl-2-oxobutanoate: step 2/4. Its function is as follows. Catalyzes the isomerization between 2-isopropylmalate and 3-isopropylmalate, via the formation of 2-isopropylmaleate. This is 3-isopropylmalate dehydratase large subunit from Vesicomyosocius okutanii subsp. Calyptogena okutanii (strain HA).